Reading from the N-terminus, the 693-residue chain is Exocyst complex component 7 (693 aa).

A Phosphoserine modification is found at S236. Positions 236–259 (SWGHEALRPRHSGRQTEPKKTTSA) are disordered.

It belongs to the EXO70 family. The exocyst complex is composed of Sec3/Exoc1, Sec5/Exoc2, Sec6/Exoc3, Sec8/Exoc4, Sec10/Exoc5, Sec15/Exoc6, Exo70/Exoc7 and Exo84/Exoc8.

Its function is as follows. Required for exocytosis. Thought to function in intracellular vesicle targeting and docking before SNARE complex formation. The protein is Exocyst complex component 7 of Drosophila melanogaster (Fruit fly).